A 172-amino-acid polypeptide reads, in one-letter code: Translationally-controlled tumor protein homolog (172 aa).

Residues Met-1 to Cys-172 enclose the TCTP domain.

It belongs to the TCTP family.

The protein localises to the cytoplasm. Its function is as follows. Involved in calcium binding and microtubule stabilization. The polypeptide is Translationally-controlled tumor protein homolog (tpt1) (Xenopus tropicalis (Western clawed frog)).